Here is a 195-residue protein sequence, read N- to C-terminus: Peptidyl-tRNA hydrolase (195 aa).

Y17 contacts tRNA. H22 acts as the Proton acceptor in catalysis. TRNA-binding residues include F68, N70, and N116.

Belongs to the PTH family. In terms of assembly, monomer.

It is found in the cytoplasm. It carries out the reaction an N-acyl-L-alpha-aminoacyl-tRNA + H2O = an N-acyl-L-amino acid + a tRNA + H(+). Its function is as follows. Hydrolyzes ribosome-free peptidyl-tRNAs (with 1 or more amino acids incorporated), which drop off the ribosome during protein synthesis, or as a result of ribosome stalling. In terms of biological role, catalyzes the release of premature peptidyl moieties from peptidyl-tRNA molecules trapped in stalled 50S ribosomal subunits, and thus maintains levels of free tRNAs and 50S ribosomes. The polypeptide is Peptidyl-tRNA hydrolase (Shewanella loihica (strain ATCC BAA-1088 / PV-4)).